We begin with the raw amino-acid sequence, 68 residues long: Small integral membrane protein 10-like protein 3 (68 aa).

As to expression, expressed specifically in salivary glands (at protein level).

This Mus musculus (Mouse) protein is Small integral membrane protein 10-like protein 3.